The sequence spans 1370 residues: Histidine kinase P4 (1370 aa).

The N-terminal stretch at 1 to 20 (MRNIGVFSVILFSFLAISLK) is a signal peptide. A helical membrane pass occupies residues 799–819 (WAFCLYALCIGTALIALISFL). In terms of domain architecture, Histidine kinase spans 852-1072 (NISHEFRTPL…IFRVSLPLGR (221 aa)). Residue His855 is modified to Phosphohistidine; by autocatalysis. In terms of domain architecture, Response regulatory spans 1119-1234 (TILIVEDHKP…EFRLRIKNIL (116 aa)). Position 1167 is a 4-aspartylphosphate (Asp1167). In terms of domain architecture, HTH araC/xylS-type spans 1266-1365 (KKAFKIVEDN…NETPSQYQNR (100 aa)). 2 consecutive DNA-binding regions (H-T-H motif) follow at residues 1284-1305 (LAFS…KAWT) and 1332-1355 (ISQI…QKKF).

Autophosphorylated. Activation requires a sequential transfer of a phosphate group from a His in the primary transmitter domain, to an Asp in the receiver domain and to a His in the secondary transmitter domain.

It is found in the membrane. The protein localises to the cell surface. It catalyses the reaction ATP + protein L-histidine = ADP + protein N-phospho-L-histidine.. Its function is as follows. Histidine kinase probably involved in ulvan degradation. Ulvan is the main polysaccharide component of the Ulvales (green seaweed) cell wall. It is composed of disaccharide building blocks comprising 3-sulfated rhamnose (Rha3S) linked to D-glucuronic acid (GlcA), L-iduronic acid (IduA), or D-xylose (Xyl). The protein is Histidine kinase P4 of Formosa agariphila (strain DSM 15362 / KCTC 12365 / LMG 23005 / KMM 3901 / M-2Alg 35-1).